The sequence spans 434 residues: Vi polysaccharide export inner-membrane protein VexD (434 aa).

Basic and acidic residues predominate over residues 1–50 (MENSERIKKWKEERAKVAQESRASRLQQKEDERALRQTEKSADAKSHHNP). The tract at residues 1–58 (MENSERIKKWKEERAKVAQESRASRLQQKEDERALRQTEKSADAKSHHNPDAGWSATD) is disordered. The next 2 helical transmembrane spans lie at 84–104 (LFLY…ILTS) and 409–429 (WLLF…LITI).

The protein belongs to the BexC/CtrB/KpsE family.

The protein localises to the cell inner membrane. In terms of biological role, may form an ATP-driven capsule polysaccharide export apparatus, in association with the VexA, VexB and VexC proteins. The protein is Vi polysaccharide export inner-membrane protein VexD (vexD) of Salmonella typhi.